A 214-amino-acid polypeptide reads, in one-letter code: Protein PsaE (214 aa).

Positions 1–24 (MSHCVVLNKLESVLIIGDSRYALS) are cleaved as a signal peptide. Positions 1-94 (MSHCVVLNKL…YKNEGYSYQK (94 aa)) form a DNA-binding region, ompR/PhoB-type.

Required for expression of pH 6 antigen. This is Protein PsaE (psaE) from Yersinia pseudotuberculosis serotype I (strain IP32953).